We begin with the raw amino-acid sequence, 156 residues long: Large ribosomal subunit protein uL22 (156 aa).

It belongs to the universal ribosomal protein uL22 family. In terms of assembly, part of the 50S ribosomal subunit.

This protein binds specifically to 23S rRNA. It makes multiple contacts with different domains of the 23S rRNA in the assembled 50S subunit and ribosome. Functionally, the globular domain of the protein is located near the polypeptide exit tunnel on the outside of the subunit, while an extended beta-hairpin is found that lines the wall of the exit tunnel in the center of the 70S ribosome. This chain is Large ribosomal subunit protein uL22, found in Methanocaldococcus jannaschii (strain ATCC 43067 / DSM 2661 / JAL-1 / JCM 10045 / NBRC 100440) (Methanococcus jannaschii).